The primary structure comprises 260 residues: Diphthine synthase (260 aa).

Residues leucine 9, aspartate 85, isoleucine 88, 113-114 (TA), leucine 168, alanine 202, and histidine 227 each bind S-adenosyl-L-methionine.

Belongs to the diphthine synthase family. In terms of assembly, homodimer.

It carries out the reaction 2-[(3S)-amino-3-carboxypropyl]-L-histidyl-[translation elongation factor 2] + 3 S-adenosyl-L-methionine = diphthine-[translation elongation factor 2] + 3 S-adenosyl-L-homocysteine + 3 H(+). It functions in the pathway protein modification; peptidyl-diphthamide biosynthesis. Functionally, S-adenosyl-L-methionine-dependent methyltransferase that catalyzes the trimethylation of the amino group of the modified target histidine residue in translation elongation factor 2 (EF-2), to form an intermediate called diphthine. The three successive methylation reactions represent the second step of diphthamide biosynthesis. In Haloquadratum walsbyi (strain DSM 16790 / HBSQ001), this protein is Diphthine synthase.